Reading from the N-terminus, the 483-residue chain is PRAME family member 12 (483 aa).

The LRR 1; degenerate repeat unit spans residues 97-122 (RWKLQVLDLRNVDENFWGIWSGASAL). Residues 177-201 (HVCCKELQIFGIAIHRIIEVLNTVE) form an LRR 2; degenerate repeat. One copy of the LRR 3; degenerate repeat lies at 202–228 (LDCIQEVEVCCPWELSILIRFAPYLGQ). One copy of the LRR 4; degenerate repeat lies at 229-264 (MRNLRKLVLFNIHVSACIPLDRKEQFVIQFTSQFLK). LRR repeat units follow at residues 265 to 290 (LDYF…LRCL), 291 to 322 (QAPL…RQLK), 323 to 341 (ELDL…PLSV), 347 to 374 (EATL…ALSR), and 375 to 399 (CSQL…LLRH).

The protein belongs to the PRAME family.

The sequence is that of PRAME family member 12 from Homo sapiens (Human).